A 179-amino-acid polypeptide reads, in one-letter code: Inorganic pyrophosphatase (179 aa).

Residues lysine 30, arginine 44, and tyrosine 56 each coordinate substrate. Aspartate 66, aspartate 71, and aspartate 103 together coordinate Mg(2+). Tyrosine 143 serves as a coordination point for substrate.

It belongs to the PPase family. As to quaternary structure, homohexamer. Mg(2+) is required as a cofactor.

Its subcellular location is the cytoplasm. The catalysed reaction is diphosphate + H2O = 2 phosphate + H(+). Catalyzes the hydrolysis of inorganic pyrophosphate (PPi) forming two phosphate ions. The chain is Inorganic pyrophosphatase from Wigglesworthia glossinidia brevipalpis.